Reading from the N-terminus, the 326-residue chain is DNA-directed RNA polymerase subunit alpha (326 aa).

The alpha N-terminal domain (alpha-NTD) stretch occupies residues 1–231; it reads MQTALLKPKI…DQLSVFAALE (231 aa). The tract at residues 247–326 is alpha C-terminal domain (alpha-CTD); that stretch reads IDPILLRPVD…ENWPPAGLEK (80 aa).

Belongs to the RNA polymerase alpha chain family. As to quaternary structure, homodimer. The RNAP catalytic core consists of 2 alpha, 1 beta, 1 beta' and 1 omega subunit. When a sigma factor is associated with the core the holoenzyme is formed, which can initiate transcription.

It catalyses the reaction RNA(n) + a ribonucleoside 5'-triphosphate = RNA(n+1) + diphosphate. Its function is as follows. DNA-dependent RNA polymerase catalyzes the transcription of DNA into RNA using the four ribonucleoside triphosphates as substrates. The sequence is that of DNA-directed RNA polymerase subunit alpha from Ralstonia nicotianae (strain ATCC BAA-1114 / GMI1000) (Ralstonia solanacearum).